The sequence spans 461 residues: Ribosomal protein uS12 methylthiotransferase RimO (461 aa).

Residues Pro-9–Pro-124 form the MTTase N-terminal domain. [4Fe-4S] cluster is bound by residues Cys-18, Cys-54, Cys-83, Cys-159, Cys-163, and Cys-166. A Radical SAM core domain is found at Leu-145–Lys-387. Residues Gln-389–Val-461 form the TRAM domain.

This sequence belongs to the methylthiotransferase family. RimO subfamily. Requires [4Fe-4S] cluster as cofactor.

It is found in the cytoplasm. The enzyme catalyses L-aspartate(89)-[ribosomal protein uS12]-hydrogen + (sulfur carrier)-SH + AH2 + 2 S-adenosyl-L-methionine = 3-methylsulfanyl-L-aspartate(89)-[ribosomal protein uS12]-hydrogen + (sulfur carrier)-H + 5'-deoxyadenosine + L-methionine + A + S-adenosyl-L-homocysteine + 2 H(+). Its function is as follows. Catalyzes the methylthiolation of an aspartic acid residue of ribosomal protein uS12. The polypeptide is Ribosomal protein uS12 methylthiotransferase RimO (Polaromonas naphthalenivorans (strain CJ2)).